The sequence spans 334 residues: Ferredoxin--NADP reductase (334 aa).

Aspartate 33, glutamine 41, tyrosine 46, alanine 86, phenylalanine 120, aspartate 286, and threonine 327 together coordinate FAD.

The protein belongs to the ferredoxin--NADP reductase type 2 family. In terms of assembly, homodimer. Requires FAD as cofactor.

The catalysed reaction is 2 reduced [2Fe-2S]-[ferredoxin] + NADP(+) + H(+) = 2 oxidized [2Fe-2S]-[ferredoxin] + NADPH. The chain is Ferredoxin--NADP reductase from Rickettsia akari (strain Hartford).